A 574-amino-acid polypeptide reads, in one-letter code: Zinc finger protein 394 (574 aa).

S12 carries the phosphoserine modification. K40 participates in a covalent cross-link: Glycyl lysine isopeptide (Lys-Gly) (interchain with G-Cter in SUMO2). In terms of domain architecture, SCAN box spans 64 to 146 (RLHFRQLRYQ…AVVRALQRAL (83 aa)). In terms of domain architecture, KRAB spans 155 to 230 (VTFEDMAVSL…LQEAFQGKHP (76 aa)). The interval 182–202 (ESAQKDSGSTVPPSLESRVEN) is disordered. Glycyl lysine isopeptide (Lys-Gly) (interchain with G-Cter in SUMO2) cross-links involve residues K203, K228, and K254. The tract at residues 231–284 (LFSKCGSTHEDRVEKQSGNPLPLKLENSAEAEGLNSISDVNKNGSIEGEDSKNN) is disordered. A compositionally biased stretch (polar residues) spans 265 to 274 (NSISDVNKNG). K282 is covalently cross-linked (Glycyl lysine isopeptide (Lys-Gly) (interchain with G-Cter in SUMO2)). 7 consecutive C2H2-type zinc fingers follow at residues 358–380 (YKCG…QRIH), 386–408 (YGCQ…QRTH), 414–436 (YTCL…QSTH), 442–463 (FKCE…QRLH), 469–491 (YKCE…HRIH), 497–519 (YGCS…QRIH), and 525–547 (YKCL…QRIH). K443 participates in a covalent cross-link: Glycyl lysine isopeptide (Lys-Gly) (interchain with G-Cter in SUMO2).

It belongs to the krueppel C2H2-type zinc-finger protein family.

It is found in the nucleus. Its function is as follows. May be involved in transcriptional regulation. This Pongo abelii (Sumatran orangutan) protein is Zinc finger protein 394 (ZNF394).